Consider the following 59-residue polypeptide: Small ribosomal subunit protein bS21 (59 aa).

Positions 40–59 are disordered; the sequence is KPSVKRKKKSEAARKRKSFR. Residues 43 to 59 show a composition bias toward basic residues; the sequence is VKRKKKSEAARKRKSFR.

It belongs to the bacterial ribosomal protein bS21 family.

The chain is Small ribosomal subunit protein bS21 from Desulforamulus reducens (strain ATCC BAA-1160 / DSM 100696 / MI-1) (Desulfotomaculum reducens).